A 113-amino-acid chain; its full sequence is Insulin-like peptide 02 (113 aa).

An N-terminal signal peptide occupies residues 1 to 22 (MFYLTFLLFGAICIGQIQLGQP). Positions 23 to 42 (VKFKVNEDGHRPSVYPIKYR) are excised as a propeptide. 3 cysteine pairs are disulfide-bonded: C44–C99, C56–C112, and C98–C103. Positions 62 to 87 (RRKRSIEADIITDKDTANSYFNRVKR) are cleaved as a propeptide — c peptide.

It belongs to the insulin family.

The protein localises to the secreted. Insulin decreases blood glucose concentration. May have evolved to activate insulin receptors (INSR) in vertebrates. Molecular docking studies reveals unique interaction with the human insulin receptor. In vivo, insulin-like peptide injection reduces blood glucose levels in two models of zebrafish diabetes (streptozotocin- and glucose-induced). Also shorter swimming distance of zebrafish larvae, an effect which is not observed with human insulin. This is Insulin-like peptide 02 from Exaiptasia diaphana (Tropical sea anemone).